The primary structure comprises 638 residues: Threonine--tRNA ligase (638 aa).

One can recognise a TGS domain in the interval 1–61 (MPVVTLPDGS…EADAEVALVT (61 aa)). The tract at residues 242-533 (DHRKLGKALD…LTEHYAGQYP (292 aa)) is catalytic. Residues C333, H384, and H510 each coordinate Zn(2+).

It belongs to the class-II aminoacyl-tRNA synthetase family. In terms of assembly, homodimer. The cofactor is Zn(2+).

The protein localises to the cytoplasm. The enzyme catalyses tRNA(Thr) + L-threonine + ATP = L-threonyl-tRNA(Thr) + AMP + diphosphate + H(+). Functionally, catalyzes the attachment of threonine to tRNA(Thr) in a two-step reaction: L-threonine is first activated by ATP to form Thr-AMP and then transferred to the acceptor end of tRNA(Thr). Also edits incorrectly charged L-seryl-tRNA(Thr). The polypeptide is Threonine--tRNA ligase (Methylococcus capsulatus (strain ATCC 33009 / NCIMB 11132 / Bath)).